The primary structure comprises 517 residues: Tyrosine-protein kinase Src42A (517 aa).

The segment at 1–47 is disordered; it reads MGNCLTTQKGEPDKPADRIKLDDPPTIGVGVGVPQIPMPSHAGQPPE. Positions 10–23 are enriched in basic and acidic residues; it reads GEPDKPADRIKLDD. An SH3 domain is found at 63–124; it reads ANAKIFVALY…PSNYVAKLKS (62 aa). Residues 130–222 enclose the SH2 domain; it reads WYFRKIKRIE…GLCVNLCKPC (93 aa). One can recognise a Protein kinase domain in the interval 248-504; the sequence is LKFVRKLGSG…TLQWKLEDFY (257 aa). ATP-binding positions include 254-262 and Lys-276; that span reads LGSGQFGDV. Residue Asp-370 is the Proton acceptor of the active site.

Belongs to the protein kinase superfamily. Tyr protein kinase family. SRC subfamily. As to expression, ubiquitous in early embryos, in stages 13-16 expression is seen in visceral mesoderm, hindgut, brain, anal pads and ventral ganglions. In larvae, expression is in CNS, wing disk, leg disk and photoreceptor precursors in the eye-antenna disks posterior to the morphogenetic furrow.

It carries out the reaction L-tyrosyl-[protein] + ATP = O-phospho-L-tyrosyl-[protein] + ADP + H(+). Its function is as follows. Required directly or indirectly for the phosphorylation of drpr which is necessary for the interaction of drpr with shark and subsequent glial phagocytic activity. Together with drpr and shark, promotes the migration of macrophages to sites of wounding as part of a signaling cascade where Src42A detects production of hydrogen peroxide at wound sites which triggers phosphorylation of drpr and subsequent recruitment and activation of shark. Essential for correct eye morphogenesis (ommatidial R7 neuron formation) which requires the Ras1/MAPK signal transduction pathway. May be involved in the regulation of cytoskeleton organization and cell-cell contacts in developing ommatidia. Involved in phosphorylation of Dscam1, a cell surface receptor involved in targeting of growing axons during eye morphogenesis, and its interaction partner the SH2/SH3 adapter protein dock/dreadlocks. During embryogenesis, involved in regulation of dorsal closure where it may have a role in activating the JNK pathway in leading edge cells during this process. The chain is Tyrosine-protein kinase Src42A from Drosophila melanogaster (Fruit fly).